A 552-amino-acid chain; its full sequence is Putative E3 ubiquitin-protein ligase ARI6 (552 aa).

A TRIAD supradomain region spans residues 129–343 (REFTCGICFE…GGYYACNRYE (215 aa)). Zn(2+) is bound by residues Cys-133, Cys-136, Cys-150, His-152, Cys-155, Cys-158, Cys-178, Cys-183, Cys-222, Cys-227, Cys-245, Cys-247, Cys-252, Cys-255, His-260, Cys-265, Cys-292, and Cys-295. The segment at 133-183 (CGICFESYPLEETISVSCGHPFCATCWTGYISTSINDGPGCLMLKCPYPCC) adopts an RING-type 1 zinc-finger fold. Residues 202 to 265 (ERYYRYFLRS…SEEAHRPVDC (64 aa)) form an IBR-type zinc finger. Residues 292–322 (CPKCKRPIEKNHGCMHMTCTPPCKFEFCWLC) form an RING-type 2; atypical zinc finger. Cys-305 is an active-site residue. 6 residues coordinate Zn(2+): Cys-310, Cys-314, Cys-319, Cys-322, His-329, and Cys-339. The interval 518–552 (HAASSKPANCKPSSNTKDGGKGKKEALTMAGSAET) is disordered. The span at 519 to 534 (AASSKPANCKPSSNTK) shows a compositional bias: polar residues.

The protein belongs to the RBR family. Ariadne subfamily. Requires Zn(2+) as cofactor.

The catalysed reaction is [E2 ubiquitin-conjugating enzyme]-S-ubiquitinyl-L-cysteine + [acceptor protein]-L-lysine = [E2 ubiquitin-conjugating enzyme]-L-cysteine + [acceptor protein]-N(6)-ubiquitinyl-L-lysine.. Its pathway is protein modification; protein ubiquitination. Might act as an E3 ubiquitin-protein ligase, or as part of E3 complex, which accepts ubiquitin from specific E2 ubiquitin-conjugating enzymes and then transfers it to substrates. The chain is Putative E3 ubiquitin-protein ligase ARI6 (ARI6) from Arabidopsis thaliana (Mouse-ear cress).